A 496-amino-acid polypeptide reads, in one-letter code: Glycerol kinase (496 aa).

Residue Thr12 participates in ADP binding. 3 residues coordinate ATP: Thr12, Thr13, and Ser14. Residue Thr12 participates in sn-glycerol 3-phosphate binding. Arg16 serves as a coordination point for ADP. 3 residues coordinate sn-glycerol 3-phosphate: Arg82, Glu83, and Tyr134. 3 residues coordinate glycerol: Arg82, Glu83, and Tyr134. At His230 the chain carries Phosphohistidine; by HPr. Asp244 contributes to the sn-glycerol 3-phosphate binding site. Glycerol is bound by residues Asp244 and Gln245. Residues Thr266 and Gly309 each coordinate ADP. ATP-binding residues include Thr266, Gly309, Gln313, and Gly410. Residues Gly410 and Asn414 each coordinate ADP.

The protein belongs to the FGGY kinase family. Homotetramer and homodimer (in equilibrium). Post-translationally, the phosphoenolpyruvate-dependent sugar phosphotransferase system (PTS), including enzyme I, and histidine-containing protein (HPr) are required for the phosphorylation, which leads to the activation of the enzyme.

It catalyses the reaction glycerol + ATP = sn-glycerol 3-phosphate + ADP + H(+). The protein operates within polyol metabolism; glycerol degradation via glycerol kinase pathway; sn-glycerol 3-phosphate from glycerol: step 1/1. Activated by phosphorylation and inhibited by fructose 1,6-bisphosphate (FBP). In terms of biological role, key enzyme in the regulation of glycerol uptake and metabolism. Catalyzes the phosphorylation of glycerol to yield sn-glycerol 3-phosphate. This is Glycerol kinase from Bacillus licheniformis (strain ATCC 14580 / DSM 13 / JCM 2505 / CCUG 7422 / NBRC 12200 / NCIMB 9375 / NCTC 10341 / NRRL NRS-1264 / Gibson 46).